A 455-amino-acid chain; its full sequence is MSKKVMSVVILAAGKGTRMCSNLPKVLHLLAGKPMVQHVINTANQLDCTRIHLVYGHGGALLKEKLNNEKLNWILQEEQWGTGHALQKAIPYFSEDENILVLYGDVPLIEVDTLNRLLLAKPHGGISLLTARVDNPRGYGRIIRKNDDISGIVECKEATEIQKKINEINTGIMAINSSDLKKWLKQLKNDNHQNEFYLTDIIKMAYQENRKIIGIQPAHLNEIEGINDGLQLARLERLFQKQQAEKLLLSGVRILDPARFDLRGQLICGSDVVIDTNVIIEGEVTLGDRVQIRTGCLLKNCRIGDDSQINAYTVIEGSFLDKNCVVGPFARLRPGSELSEKVHVGNFVEIKKSSLGQGSKAGHLSYLGDAEIGSGVNIGAGTITCNYDGVNKHKTQIGDYVFVGSHTQFIAPVTVGDHATIGAGTTVTLNVPENELGLSRVKQKNIQGWKRPKKT.

The tract at residues 1-229 is pyrophosphorylase; the sequence is MSKKVMSVVI…LNEIEGINDG (229 aa). UDP-N-acetyl-alpha-D-glucosamine-binding positions include 11–14, K25, Q76, 81–82, 103–105, G140, E154, N169, and N227; these read LAAG, GT, and YGD. D105 lines the Mg(2+) pocket. N227 is a binding site for Mg(2+). A linker region spans residues 230–250; sequence LQLARLERLFQKQQAEKLLLS. The interval 251–455 is N-acetyltransferase; the sequence is GVRILDPARF…IQGWKRPKKT (205 aa). Positions 333 and 351 each coordinate UDP-N-acetyl-alpha-D-glucosamine. H363 functions as the Proton acceptor in the catalytic mechanism. UDP-N-acetyl-alpha-D-glucosamine contacts are provided by Y366 and N377. Residues A380, 386–387, S405, A423, and R440 each bind acetyl-CoA; that span reads NY.

It in the N-terminal section; belongs to the N-acetylglucosamine-1-phosphate uridyltransferase family. In the C-terminal section; belongs to the transferase hexapeptide repeat family. In terms of assembly, homotrimer. The cofactor is Mg(2+).

The protein resides in the cytoplasm. The enzyme catalyses alpha-D-glucosamine 1-phosphate + acetyl-CoA = N-acetyl-alpha-D-glucosamine 1-phosphate + CoA + H(+). It catalyses the reaction N-acetyl-alpha-D-glucosamine 1-phosphate + UTP + H(+) = UDP-N-acetyl-alpha-D-glucosamine + diphosphate. It participates in nucleotide-sugar biosynthesis; UDP-N-acetyl-alpha-D-glucosamine biosynthesis; N-acetyl-alpha-D-glucosamine 1-phosphate from alpha-D-glucosamine 6-phosphate (route II): step 2/2. It functions in the pathway nucleotide-sugar biosynthesis; UDP-N-acetyl-alpha-D-glucosamine biosynthesis; UDP-N-acetyl-alpha-D-glucosamine from N-acetyl-alpha-D-glucosamine 1-phosphate: step 1/1. The protein operates within bacterial outer membrane biogenesis; LPS lipid A biosynthesis. Catalyzes the last two sequential reactions in the de novo biosynthetic pathway for UDP-N-acetylglucosamine (UDP-GlcNAc). The C-terminal domain catalyzes the transfer of acetyl group from acetyl coenzyme A to glucosamine-1-phosphate (GlcN-1-P) to produce N-acetylglucosamine-1-phosphate (GlcNAc-1-P), which is converted into UDP-GlcNAc by the transfer of uridine 5-monophosphate (from uridine 5-triphosphate), a reaction catalyzed by the N-terminal domain. In Hamiltonella defensa subsp. Acyrthosiphon pisum (strain 5AT), this protein is Bifunctional protein GlmU.